The primary structure comprises 86 residues: Small ribosomal subunit protein uS15 (86 aa).

The protein belongs to the universal ribosomal protein uS15 family. Part of the 30S ribosomal subunit. Forms a bridge to the 50S subunit in the 70S ribosome, contacting the 23S rRNA.

In terms of biological role, one of the primary rRNA binding proteins, it binds directly to 16S rRNA where it helps nucleate assembly of the platform of the 30S subunit by binding and bridging several RNA helices of the 16S rRNA. Forms an intersubunit bridge (bridge B4) with the 23S rRNA of the 50S subunit in the ribosome. This is Small ribosomal subunit protein uS15 from Neorickettsia sennetsu (strain ATCC VR-367 / Miyayama) (Ehrlichia sennetsu).